A 160-amino-acid chain; its full sequence is Transcriptional repressor NrdR (160 aa).

The segment at 3–34 is a zinc-finger region; sequence CPYCQYEDTQVKDSRPSEEGTVIRRRRICSVC. The region spanning 49-139 is the ATP-cone domain; sequence LLVLKKSGRY…VYRDFRNASD (91 aa).

Belongs to the NrdR family. The cofactor is Zn(2+).

Functionally, negatively regulates transcription of bacterial ribonucleotide reductase nrd genes and operons by binding to NrdR-boxes. The sequence is that of Transcriptional repressor NrdR from Bartonella henselae (strain ATCC 49882 / DSM 28221 / CCUG 30454 / Houston 1) (Rochalimaea henselae).